The following is a 384-amino-acid chain: 5-amino-6-(D-ribitylamino)uracil--L-tyrosine 4-hydroxyphenyl transferase 2 (384 aa).

Positions 53-286 constitute a Radical SAM core domain; that stretch reads VSYVVNRNIY…IAISRVILHT (234 aa). Cys67, Cys71, and Cys74 together coordinate [4Fe-4S] cluster.

It belongs to the radical SAM superfamily. CofH family. In terms of assembly, consists of two subunits, CofG and CofH. Requires [4Fe-4S] cluster as cofactor.

It carries out the reaction 5-amino-6-(D-ribitylamino)uracil + L-tyrosine + S-adenosyl-L-methionine = 5-amino-5-(4-hydroxybenzyl)-6-(D-ribitylimino)-5,6-dihydrouracil + 2-iminoacetate + 5'-deoxyadenosine + L-methionine + H(+). It functions in the pathway cofactor biosynthesis; coenzyme F0 biosynthesis. Functionally, catalyzes the radical-mediated synthesis of 5-amino-5-(4-hydroxybenzyl)-6-(D-ribitylimino)-5,6-dihydrouracil from 5-amino-6-(D-ribitylamino)uracil and L-tyrosine. This Methanosarcina barkeri (strain Fusaro / DSM 804) protein is 5-amino-6-(D-ribitylamino)uracil--L-tyrosine 4-hydroxyphenyl transferase 2.